An 801-amino-acid chain; its full sequence is Phenylalanine--tRNA ligase beta subunit (801 aa).

The tRNA-binding domain maps to alanine 39–phenylalanine 153. The region spanning threonine 406 to threonine 481 is the B5 domain. 4 residues coordinate Mg(2+): aspartate 459, aspartate 465, glutamate 468, and glutamate 469. Residues threonine 708–arginine 801 form the FDX-ACB domain.

The protein belongs to the phenylalanyl-tRNA synthetase beta subunit family. Type 1 subfamily. In terms of assembly, tetramer of two alpha and two beta subunits. The cofactor is Mg(2+).

The protein resides in the cytoplasm. It catalyses the reaction tRNA(Phe) + L-phenylalanine + ATP = L-phenylalanyl-tRNA(Phe) + AMP + diphosphate + H(+). This chain is Phenylalanine--tRNA ligase beta subunit, found in Streptococcus pyogenes serotype M18 (strain MGAS8232).